The primary structure comprises 245 residues: Eukaryotic translation initiation factor 3 subunit K (245 aa).

The region spanning 46–227 is the PCI domain; that stretch reads YDCYANLALL…EAKGTVVREN (182 aa).

The protein belongs to the eIF-3 subunit K family. Component of the eukaryotic translation initiation factor 3 (eIF-3) complex.

It is found in the cytoplasm. Component of the eukaryotic translation initiation factor 3 (eIF-3) complex, which is involved in protein synthesis of a specialized repertoire of mRNAs and, together with other initiation factors, stimulates binding of mRNA and methionyl-tRNAi to the 40S ribosome. The eIF-3 complex specifically targets and initiates translation of a subset of mRNAs involved in cell proliferation. The chain is Eukaryotic translation initiation factor 3 subunit K from Botryotinia fuckeliana (strain B05.10) (Noble rot fungus).